Consider the following 1008-residue polypeptide: DNA polymerase (1008 aa).

Belongs to the DNA polymerase type-B family. Interacts with A20. Component of the Uracil-DNA glycosylase(UDG)-A20-polymerase complex; A20 and UDG form a heterodimeric processivity factor that associates with E9 to form the processive polymerase holoenzyme.

It catalyses the reaction DNA(n) + a 2'-deoxyribonucleoside 5'-triphosphate = DNA(n+1) + diphosphate. Functionally, catalyzes DNA synthesis. Acquires processivity by associating with a heterodimeric processivity factor comprised of the viral A20 and D4 proteins, thereby forming the DNA polymerase holoenzyme. Displays 3'- to 5' exonuclease activity. Might participate in viral DNA recombination. Does not perform translesion synthesis across an abasic site. The polypeptide is DNA polymerase (POL) (Capra hircus (Goat)).